The sequence spans 133 residues: Putative redox protein FMP46, mitochondrial (133 aa).

The N-terminal 21 residues, 1–21 (MSFWKTLQRQPRTISLFTNDI), are a transit peptide targeting the mitochondrion. The active site involves cysteine 97.

The protein belongs to the FMP46 family.

It is found in the mitochondrion. Putative mitochondrial redox protein which could be involved in the reduction of small toxic molecules. This Saccharomyces cerevisiae (strain ATCC 204508 / S288c) (Baker's yeast) protein is Putative redox protein FMP46, mitochondrial (FMP46).